The primary structure comprises 256 residues: uncharacterized protein (256 aa).

The protein belongs to the methyltransferase superfamily.

The protein resides in the cytoplasm. Its subcellular location is the nucleus. Functionally, probable methyltransferase. This is an uncharacterized protein from Schizosaccharomyces pombe (strain 972 / ATCC 24843) (Fission yeast).